A 155-amino-acid polypeptide reads, in one-letter code: Ribosomal RNA large subunit methyltransferase H (155 aa).

S-adenosyl-L-methionine-binding positions include leucine 73, glycine 104, and 123–128 (LSALTL).

Belongs to the RNA methyltransferase RlmH family. In terms of assembly, homodimer.

It is found in the cytoplasm. It catalyses the reaction pseudouridine(1915) in 23S rRNA + S-adenosyl-L-methionine = N(3)-methylpseudouridine(1915) in 23S rRNA + S-adenosyl-L-homocysteine + H(+). Functionally, specifically methylates the pseudouridine at position 1915 (m3Psi1915) in 23S rRNA. This chain is Ribosomal RNA large subunit methyltransferase H, found in Saccharophagus degradans (strain 2-40 / ATCC 43961 / DSM 17024).